The chain runs to 546 residues: Zinc metalloproteinase nas-9 (546 aa).

The first 14 residues, 1 to 14 (MIFLLFVVFPFVYA), serve as a signal peptide directing secretion. A propeptide spanning residues 15–300 (QLLPELLAGF…GGGGGGRVPR (286 aa)) is cleaved from the precursor. N-linked (GlcNAc...) asparagine glycosylation occurs at asparagine 248. Positions 308–507 (SAVQKWDIWK…IRLLKKMYCR (200 aa)) constitute a Peptidase M12A domain. 5 disulfide bridges follow: cysteine 347–cysteine 506, cysteine 372–cysteine 392, cysteine 510–cysteine 546, cysteine 517–cysteine 539, and cysteine 526–cysteine 543. Histidine 401 provides a ligand contact to Zn(2+). Glutamate 402 is an active-site residue. 2 residues coordinate Zn(2+): histidine 405 and histidine 411. Positions 510–546 (CDDQNVHCGTWALHGYCKMKEQMKWMNENCKASCDKC) constitute a ShKT domain.

Zn(2+) is required as a cofactor. As to expression, expressed in hypodermis, uterus and spermatheca.

The protein resides in the secreted. In terms of biological role, metalloprotease. This Caenorhabditis elegans protein is Zinc metalloproteinase nas-9 (nas-9).